We begin with the raw amino-acid sequence, 510 residues long: ATP synthase subunit alpha (510 aa).

Position 169-176 (glycine 169–threonine 176) interacts with ATP.

This sequence belongs to the ATPase alpha/beta chains family. In terms of assembly, F-type ATPases have 2 components, CF(1) - the catalytic core - and CF(0) - the membrane proton channel. CF(1) has five subunits: alpha(3), beta(3), gamma(1), delta(1), epsilon(1). CF(0) has three main subunits: a(1), b(2) and c(9-12). The alpha and beta chains form an alternating ring which encloses part of the gamma chain. CF(1) is attached to CF(0) by a central stalk formed by the gamma and epsilon chains, while a peripheral stalk is formed by the delta and b chains.

It localises to the cell inner membrane. It catalyses the reaction ATP + H2O + 4 H(+)(in) = ADP + phosphate + 5 H(+)(out). Produces ATP from ADP in the presence of a proton gradient across the membrane. The alpha chain is a regulatory subunit. This Rickettsia massiliae (strain Mtu5) protein is ATP synthase subunit alpha.